Reading from the N-terminus, the 103-residue chain is MSQFDNVSVIKQANVYFGGKCISHTVQFPDGSRKTLGVILPSTLHFETGAPEVMEIVAGGCRVQLAGQTGWQSYQAGDSFSIPGNSGFQIEVSDTLHYVCHFG.

It belongs to the nucleoside phosphorylase PpnP family.

It carries out the reaction a purine D-ribonucleoside + phosphate = a purine nucleobase + alpha-D-ribose 1-phosphate. The catalysed reaction is adenosine + phosphate = alpha-D-ribose 1-phosphate + adenine. The enzyme catalyses cytidine + phosphate = cytosine + alpha-D-ribose 1-phosphate. It catalyses the reaction guanosine + phosphate = alpha-D-ribose 1-phosphate + guanine. It carries out the reaction inosine + phosphate = alpha-D-ribose 1-phosphate + hypoxanthine. The catalysed reaction is thymidine + phosphate = 2-deoxy-alpha-D-ribose 1-phosphate + thymine. The enzyme catalyses uridine + phosphate = alpha-D-ribose 1-phosphate + uracil. It catalyses the reaction xanthosine + phosphate = alpha-D-ribose 1-phosphate + xanthine. Functionally, catalyzes the phosphorolysis of diverse nucleosides, yielding D-ribose 1-phosphate and the respective free bases. Can use uridine, adenosine, guanosine, cytidine, thymidine, inosine and xanthosine as substrates. Also catalyzes the reverse reactions. The protein is Pyrimidine/purine nucleoside phosphorylase of Methylococcus capsulatus (strain ATCC 33009 / NCIMB 11132 / Bath).